The primary structure comprises 118 residues: MLVTFLGILGLLASQVSSQLVGQLRPTEDPPEEELEYWCAYMESCQFCWDCQDGNCINKIDGSVIYKNEYVRPCSVSRSMDKCMYDLNKGIYHSMSCSDPKAWNPYKYFRKEWKKDEL.

The N-terminal stretch at methionine 1–serine 18 is a signal peptide. A Prevents secretion from ER motif is present at residues lysine 115–leucine 118.

Belongs to the asfivirus MGF 110 family. In terms of processing, N-glycosylated.

It is found in the host endoplasmic reticulum lumen. Its function is as follows. Plays a role in virus cell tropism, and may be required for efficient virus replication in macrophages. This chain is Protein MGF 110-6L, found in Ornithodoros (relapsing fever ticks).